Consider the following 128-residue polypeptide: Large ribosomal subunit protein bL20c (128 aa).

The protein belongs to the bacterial ribosomal protein bL20 family.

It is found in the plastid. Its function is as follows. Binds directly to 23S ribosomal RNA and is necessary for the in vitro assembly process of the 50S ribosomal subunit. It is not involved in the protein synthesizing functions of that subunit. The protein is Large ribosomal subunit protein bL20c (rpl20) of Epifagus virginiana (Beechdrops).